Reading from the N-terminus, the 947-residue chain is Serine-aspartate repeat-containing protein C (947 aa).

A signal peptide spans 1 to 50 (MNNKKTATNRKGMIPNRLNKFSIRKYSVGTASILVGTTLIFGLSGHEAKA). The YSIRK-G/S signaling motif signature appears at 21–32 (FSIRKYSVGTAS). A disordered region spans residues 51 to 164 (AEHTNGELNQ…STTPKTTTIK (114 aa)). Residues 51–495 (AEHTNGELNQ…GSSTANGDQK (445 aa)) are ligand binding A region. Residues 56 to 71 (GELNQSKNETTAPSEN) show a composition bias toward polar residues. The segment covering 72 to 83 (KTTKKVDSRQLK) has biased composition (basic and acidic residues). The span at 84 to 155 (DNTQTATADQ…SNLTQAKDVS (72 aa)) shows a compositional bias: polar residues. 2 CNA-B domains span residues 496–606 (KYNL…YKTP) and 607–717 (KYSL…EEET). The interval 678–927 (TQTGTNTTED…NNSNNGTLFG (250 aa)) is disordered. Acidic residues-rich tracts occupy residues 685–695 (TEDDKDADGGE) and 712–886 (YYEE…DSDS). Positions 910–914 (LPETG) match the LPXTG sorting signal motif. A compositionally biased stretch (low complexity) spans 912-927 (ETGSENNNSNNGTLFG). T913 carries the pentaglycyl murein peptidoglycan amidated threonine modification. Positions 914-947 (GSENNNSNNGTLFGGLFAALGSLLLFGRRKKQNK) are cleaved as a propeptide — removed by sortase.

The protein belongs to the serine-aspartate repeat-containing protein (SDr) family. Homodimerizes; via N2-Domain. Interacts with host NRXN1; this interaction mediates bacterial attachment to host cells.

The protein resides in the secreted. The protein localises to the cell wall. In terms of biological role, cell surface-associated calcium-binding protein which plays an important role in adhesion and pathogenesis. Mediates interactions with components of the extracellular matrix such as host NRXN1 to promote bacterial adhesion. This is Serine-aspartate repeat-containing protein C (sdrC) from Staphylococcus aureus (strain Newman).